Reading from the N-terminus, the 938-residue chain is Isoleucine--tRNA ligase (938 aa).

Residues 58–68 (PYANGNIHIGH) carry the 'HIGH' region motif. Glu-561 serves as a coordination point for L-isoleucyl-5'-AMP. A 'KMSKS' region motif is present at residues 602 to 606 (KMSKS). Lys-605 contacts ATP. Zn(2+) is bound by residues Cys-901, Cys-904, Cys-921, and Cys-924.

Belongs to the class-I aminoacyl-tRNA synthetase family. IleS type 1 subfamily. In terms of assembly, monomer. It depends on Zn(2+) as a cofactor.

The protein resides in the cytoplasm. The enzyme catalyses tRNA(Ile) + L-isoleucine + ATP = L-isoleucyl-tRNA(Ile) + AMP + diphosphate. Functionally, catalyzes the attachment of isoleucine to tRNA(Ile). As IleRS can inadvertently accommodate and process structurally similar amino acids such as valine, to avoid such errors it has two additional distinct tRNA(Ile)-dependent editing activities. One activity is designated as 'pretransfer' editing and involves the hydrolysis of activated Val-AMP. The other activity is designated 'posttransfer' editing and involves deacylation of mischarged Val-tRNA(Ile). This Yersinia enterocolitica serotype O:8 / biotype 1B (strain NCTC 13174 / 8081) protein is Isoleucine--tRNA ligase.